Reading from the N-terminus, the 194-residue chain is Endoribonuclease YbeY (194 aa).

Positions 127, 131, and 137 each coordinate Zn(2+). Residues 162 to 194 (PLSNDEDSAPEQDDSFDDDASDSSGGIMSGGVS) are disordered. Acidic residues predominate over residues 165 to 182 (NDEDSAPEQDDSFDDDAS).

This sequence belongs to the endoribonuclease YbeY family. Zn(2+) is required as a cofactor.

Its subcellular location is the cytoplasm. In terms of biological role, single strand-specific metallo-endoribonuclease involved in late-stage 70S ribosome quality control and in maturation of the 3' terminus of the 16S rRNA. This chain is Endoribonuclease YbeY, found in Rhodopirellula baltica (strain DSM 10527 / NCIMB 13988 / SH1).